Consider the following 833-residue polypeptide: DNA ligase (833 aa).

NAD(+)-binding positions include 35–39 (DADYD), 84–85 (SL), and glutamate 115. The active-site N6-AMP-lysine intermediate is lysine 117. Residues arginine 138, glutamate 175, lysine 292, and lysine 316 each contribute to the NAD(+) site. Positions 410, 413, 428, and 434 each coordinate Zn(2+). The BRCT domain maps to 750–833 (LQTGPLDGQT…AFLGDHGQQP (84 aa)).

The protein belongs to the NAD-dependent DNA ligase family. LigA subfamily. Mg(2+) serves as cofactor. The cofactor is Mn(2+).

The catalysed reaction is NAD(+) + (deoxyribonucleotide)n-3'-hydroxyl + 5'-phospho-(deoxyribonucleotide)m = (deoxyribonucleotide)n+m + AMP + beta-nicotinamide D-nucleotide.. DNA ligase that catalyzes the formation of phosphodiester linkages between 5'-phosphoryl and 3'-hydroxyl groups in double-stranded DNA using NAD as a coenzyme and as the energy source for the reaction. It is essential for DNA replication and repair of damaged DNA. This Xanthomonas euvesicatoria pv. vesicatoria (strain 85-10) (Xanthomonas campestris pv. vesicatoria) protein is DNA ligase.